Here is a 377-residue protein sequence, read N- to C-terminus: Ribosomal RNA large subunit methyltransferase G (377 aa).

Belongs to the methyltransferase superfamily. RlmG family.

The protein resides in the cytoplasm. The catalysed reaction is guanosine(1835) in 23S rRNA + S-adenosyl-L-methionine = N(2)-methylguanosine(1835) in 23S rRNA + S-adenosyl-L-homocysteine + H(+). Specifically methylates the guanine in position 1835 (m2G1835) of 23S rRNA. This chain is Ribosomal RNA large subunit methyltransferase G, found in Shewanella oneidensis (strain ATCC 700550 / JCM 31522 / CIP 106686 / LMG 19005 / NCIMB 14063 / MR-1).